We begin with the raw amino-acid sequence, 147 residues long: Bis(5'-nucleosyl)-tetraphosphatase [asymmetrical] (147 aa).

A2 carries the post-translational modification N-acetylalanine. The Nudix hydrolase domain maps to 2-139 (ALRACGLIIF…EMKATLQEGH (138 aa)). The Nudix box signature appears at 43–64 (GHVDPGENDLETALRETQEETG).

Belongs to the Nudix hydrolase family. A divalent metal cation serves as cofactor.

The catalysed reaction is P(1),P(4)-bis(5'-guanosyl) tetraphosphate + H2O = GMP + GTP + 2 H(+). It carries out the reaction a 5'-end CoA-ribonucleoside in mRNA + H2O = a 5'-end phospho-adenosine-phospho-ribonucleoside in mRNA + (R)-4'-phosphopantetheine + 2 H(+). The enzyme catalyses a 5'-end FAD-phospho-ribonucleoside in mRNA + H2O = a 5'-end phospho-adenosine-phospho-ribonucleoside in mRNA + FMN + 2 H(+). In terms of biological role, catalyzes the asymmetric hydrolysis of diadenosine 5',5'''-P1,P4-tetraphosphate (Ap4A) to yield AMP and ATP. Exhibits decapping activity towards FAD-capped RNAs and dpCoA-capped RNAs in vitro. The protein is Bis(5'-nucleosyl)-tetraphosphatase [asymmetrical] (Nudt2) of Rattus norvegicus (Rat).